A 199-amino-acid polypeptide reads, in one-letter code: Holliday junction branch migration complex subunit RuvA (199 aa).

Positions 1–63 are domain I; the sequence is MIAYIEGKLA…EDAHTLFGFA (63 aa). The segment at 64–142 is domain II; that stretch reads DLMEKEMFLH…KDALLAGSDS (79 aa). Residues 143 to 151 are flexible linker; the sequence is KQNFSVSHN. The domain III stretch occupies residues 151-199; that stretch reads NSIRSEALTALITLGFTKTVAEKNLDLILKGNSNSFTLEDLIKQALKMS.

Belongs to the RuvA family. As to quaternary structure, homotetramer. Forms an RuvA(8)-RuvB(12)-Holliday junction (HJ) complex. HJ DNA is sandwiched between 2 RuvA tetramers; dsDNA enters through RuvA and exits via RuvB. An RuvB hexamer assembles on each DNA strand where it exits the tetramer. Each RuvB hexamer is contacted by two RuvA subunits (via domain III) on 2 adjacent RuvB subunits; this complex drives branch migration. In the full resolvosome a probable DNA-RuvA(4)-RuvB(12)-RuvC(2) complex forms which resolves the HJ.

It is found in the cytoplasm. In terms of biological role, the RuvA-RuvB-RuvC complex processes Holliday junction (HJ) DNA during genetic recombination and DNA repair, while the RuvA-RuvB complex plays an important role in the rescue of blocked DNA replication forks via replication fork reversal (RFR). RuvA specifically binds to HJ cruciform DNA, conferring on it an open structure. The RuvB hexamer acts as an ATP-dependent pump, pulling dsDNA into and through the RuvAB complex. HJ branch migration allows RuvC to scan DNA until it finds its consensus sequence, where it cleaves and resolves the cruciform DNA. This is Holliday junction branch migration complex subunit RuvA from Cytophaga hutchinsonii (strain ATCC 33406 / DSM 1761 / CIP 103989 / NBRC 15051 / NCIMB 9469 / D465).